The chain runs to 214 residues: Large ribosomal subunit protein uL16 (214 aa).

Arg-32 carries the citrulline modification. Residue Lys-175 forms a Glycyl lysine isopeptide (Lys-Gly) (interchain with G-Cter in SUMO2) linkage. Residue Lys-188 forms a Glycyl lysine isopeptide (Lys-Gly) (interchain with G-Cter in ubiquitin) linkage.

This sequence belongs to the universal ribosomal protein uL16 family. In terms of assembly, component of the large ribosomal subunit. Mature ribosomes consist of a small (40S) and a large (60S) subunit. The 40S subunit contains about 33 different proteins and 1 molecule of RNA (18S). The 60S subunit contains about 49 different proteins and 3 molecules of RNA (28S, 5.8S and 5S). In terms of processing, citrullinated by PADI4. Ufmylated by UFL1.

Its subcellular location is the cytoplasm. Component of the large ribosomal subunit. Plays a role in the formation of actively translating ribosomes. May play a role in the embryonic brain development. The polypeptide is Large ribosomal subunit protein uL16 (Rattus norvegicus (Rat)).